A 150-amino-acid polypeptide reads, in one-letter code: Histone deacetylase complex subunit SAP18 (150 aa).

This sequence belongs to the SAP18 family. Forms a complex with SIN3 and histone deacetylase. Interacts with the N-terminal residues of TRL. Interacts with BCD; in vitro and yeast cells.

It is found in the nucleus. Its subcellular location is the cytoplasm. In terms of biological role, involved in the tethering of the SIN3 complex to core histone proteins. Interacts with bicoid (bcd) to repress transcription of bicoid target genes in the anterior tip of the embryo; a process known as retraction. Interacts with Trl and binds to Polycomb response elements at the bithorax complex. May contribute to the regulation of other homeotic gene expressions. This Drosophila melanogaster (Fruit fly) protein is Histone deacetylase complex subunit SAP18 (Bin1).